The sequence spans 696 residues: DNA ligase (696 aa).

Residues 36 to 40, 85 to 86, and Glu124 contribute to the NAD(+) site; these read DAVYD and SL. The active-site N6-AMP-lysine intermediate is the Lys126. The NAD(+) site is built by Arg147, Glu184, Lys308, and Lys332. Residues Cys426, Cys429, Cys444, and Cys449 each coordinate Zn(2+). The BRCT domain maps to 618-696; the sequence is QRTVSLQGQT…EEELLKLLAS (79 aa).

Belongs to the NAD-dependent DNA ligase family. LigA subfamily. Mg(2+) is required as a cofactor. It depends on Mn(2+) as a cofactor.

The enzyme catalyses NAD(+) + (deoxyribonucleotide)n-3'-hydroxyl + 5'-phospho-(deoxyribonucleotide)m = (deoxyribonucleotide)n+m + AMP + beta-nicotinamide D-nucleotide.. In terms of biological role, DNA ligase that catalyzes the formation of phosphodiester linkages between 5'-phosphoryl and 3'-hydroxyl groups in double-stranded DNA using NAD as a coenzyme and as the energy source for the reaction. It is essential for DNA replication and repair of damaged DNA. In Prochlorococcus marinus (strain MIT 9303), this protein is DNA ligase.